The primary structure comprises 515 residues: MTVTYAHEPFTDFTEAKNKTAFGESLAFVNTQLGKHYPLVINGEKIETDRKIISINPANKEEIIGYASTADQELAEKAMQAALQAFDSWKKQRPEHRANILFKAAAILRRRKHEFSSYLVKEAGKPWKEADADTAEAIDFLEFYARQMLKLKEGAPVKSRAGEVNQYHYEALGVGIVISPFNFPLAIMAGTAVAAIVTGNTILLKPADAAPVVAAKFVEVMEEAGLPNGVLNYIPGDGAEIGDFLVEHPKTRFVSFTGSRAVGCRIYERAAKVQPGQKWLKRVIAEMGGKDTVLVDKDADLDLAASSIVYSAFGYSGQKCSAGSRAVIHQDVYDEVVEKAVALTKTLTVGNPEDPDTYMGPVIHEASYNKVMKYIEIGKSEGKLLAGGEGDDSKGYFIQPTIFADVDENARLMQEEIFGPVVAICKARDFDHMLEIANNTEYGLTGALLTKNRAHIERAREDFHVGNLYFNRGCTGAIVGYQPFGGFNMSGTDSKAGGPDYLILHMQAKTTSEAF.

Residues E286 and C320 contribute to the active site.

It belongs to the aldehyde dehydrogenase family. RocA subfamily.

The catalysed reaction is L-glutamate 5-semialdehyde + NAD(+) + H2O = L-glutamate + NADH + 2 H(+). Its pathway is amino-acid degradation; L-proline degradation into L-glutamate; L-glutamate from L-proline: step 2/2. This chain is 1-pyrroline-5-carboxylate dehydrogenase (rocA), found in Bacillus subtilis (strain 168).